Reading from the N-terminus, the 506-residue chain is Alpha-L-fucosidase 1 (506 aa).

An N-terminal signal peptide occupies residues 1–23; sequence MNSQITLFFFFFSILSLSQISNS. N-linked (GlcNAc...) asparagine glycans are attached at residues asparagine 22, asparagine 82, asparagine 248, asparagine 320, asparagine 355, and asparagine 487.

It belongs to the glycosyl hydrolase 29 family.

The protein resides in the secreted. It localises to the extracellular space. The protein localises to the apoplast. The enzyme catalyses an alpha-L-fucoside + H2O = L-fucose + an alcohol. Functionally, hydrolyzes both 3- and 4-linked fucoses in Lewis determinants. Not active on neither 2-linked fucose nor on fucose in alpha-1,3-linkage to the innermost GlcNAc. The polypeptide is Alpha-L-fucosidase 1 (FUC1) (Arabidopsis thaliana (Mouse-ear cress)).